Here is a 377-residue protein sequence, read N- to C-terminus: tRNA/tmRNA (uracil-C(5))-methyltransferase (377 aa).

S-adenosyl-L-methionine contacts are provided by Q199, Y227, N232, E248, and D308. The Nucleophile role is filled by C333. E367 acts as the Proton acceptor in catalysis.

The protein belongs to the class I-like SAM-binding methyltransferase superfamily. RNA M5U methyltransferase family. TrmA subfamily.

The catalysed reaction is uridine(54) in tRNA + S-adenosyl-L-methionine = 5-methyluridine(54) in tRNA + S-adenosyl-L-homocysteine + H(+). The enzyme catalyses uridine(341) in tmRNA + S-adenosyl-L-methionine = 5-methyluridine(341) in tmRNA + S-adenosyl-L-homocysteine + H(+). In terms of biological role, dual-specificity methyltransferase that catalyzes the formation of 5-methyluridine at position 54 (m5U54) in all tRNAs, and that of position 341 (m5U341) in tmRNA (transfer-mRNA). The sequence is that of tRNA/tmRNA (uracil-C(5))-methyltransferase from Aeromonas salmonicida (strain A449).